The sequence spans 1341 residues: MERYEIPKEIGEIMFGLLSPDYIRQMSVAKIVTPDTYDEDGYPIDGGLMDTRLGVIDPGLVCKTCGGRIGECPGHFGHIELAKPVIHIGFAKTIYKILKAVCPHCGRVAISETKRKEILEKMEKLERDGGNKWEVCEEVYKEASKVTICPHCGEIKYDIKFEKPTTYYRIDGNEEKTLTPSDVREILEKIPDEDCILLGLNPEVARPEWMVLTVLPVPPVTVRPSITLETGERSEDDLTHKLVDIIRINNRLEENIEGGAPNLIIEDLWNLLQYHVNTYFDNEAPGIPPAKHRSGRPLKTLAQRLKGKEGRFRYNLAGKRVNFSSRTVISPDPCLSINEVGVPEVVAKELTVPEKVTKYNIERIRQLLRNGSEKHPGVNYVIRKMIGRDGTEQEYKVKITESNKDFWAENIREGDIVERHLMDGDIVLYNRQPSLHRMSIMAHRVRVLPYRTFRHNLCVCVDGDTTVLLDGKLIKIKDLEDKWKDVKVLTSDDLNPKLTSLSKYWKLNADEYGKKIYKIKTELGREIIATEDHPFYTTNGRKRCGELKVGDEVIIYPNDFPMFEDDNRVIVDEEKIKKVINNIGGTYKNKIINELKDRKLIPLTYNDQKASILARIVGHVMGDGSLIINNKNSRVVFRGDIEDLKTIKEDLKELGYDGEEIKLHEGETEITDYNGKKRIIKGKGYSFEVRKKSLCILLKALGCVGGDKTKKMYGIPNWIKTAPKYIKKEFLSAYFGSELTTPKIRNHGTSFKELSFKIAKIEEIFDEDRFIKDIKEMLKEFGIELKVRVEEGNLRKDGYKTKVYVASIYNHKEFFGRIGYTYANKKETLARYAYEYLLTKEKYLKDRNIKKLENNTKFITFDKFIKEKCLKNGFVKEKIVSIEETKVDYVYDITTISETHNFIANGFLTGNCPPYNADFDGDEMNLHVPQSEEARAEAEALMLVEKHILSPRFGGPIIGAIHDFISGAYLLTSNYFTKDEATLILRSGGIKDELWEPDKVENGVPLYSGKKIFSKALPKGLNLRYKAKICRKCDVCKKEECEYDAYVVIKDGELIKGVIDKNGYGAEAGLILHTIVKEFGPEAGRKFLDSATKMAIRAVMLRGFTTGIDDEDLPEEALKEIEKVLDEAEEKVKEIIEKYERGELELLPGLNLEESREAYISNVLREARDKAGAIAERYLGLDNHAVIMAVTGARGNILNLTQMAACLGQQSVRGKRIFRGYRGRVLPHFEKGDLGARSHGFVRSSYKKGLSPTEFFFHAMGGREGLVDQAVRTAQSGYMQRRLINALQDLKTEFDGTVRDSRGIMIQFKYGEDGIDPMLADRGKAVNIDRIIDKVKMKYNQ.

Zn(2+)-binding residues include Cys62, Cys65, Cys72, His75, Cys102, Cys105, Cys149, and Cys152. Positions 918, 920, and 922 each coordinate Mg(2+).

Belongs to the RNA polymerase beta' chain family. In terms of assembly, part of the RNA polymerase complex. It depends on Mg(2+) as a cofactor. Zn(2+) serves as cofactor. This protein undergoes a protein self splicing that involves a post-translational excision of the intervening region (intein) followed by peptide ligation.

It is found in the cytoplasm. It carries out the reaction RNA(n) + a ribonucleoside 5'-triphosphate = RNA(n+1) + diphosphate. Functionally, DNA-dependent RNA polymerase (RNAP) catalyzes the transcription of DNA into RNA using the four ribonucleoside triphosphates as substrates. Forms the clamp head domain. In Methanocaldococcus jannaschii (strain ATCC 43067 / DSM 2661 / JAL-1 / JCM 10045 / NBRC 100440) (Methanococcus jannaschii), this protein is DNA-directed RNA polymerase subunit Rpo1N.